Reading from the N-terminus, the 264-residue chain is Purine nucleoside phosphorylase slr1573 (264 aa).

Positions 61, 104, and 121 each coordinate Zn(2+).

Belongs to the purine nucleoside phosphorylase YfiH/LACC1 family. In terms of assembly, homodimer. The cofactor is Cu(2+). Zn(2+) serves as cofactor.

It carries out the reaction adenosine + phosphate = alpha-D-ribose 1-phosphate + adenine. The catalysed reaction is S-methyl-5'-thioadenosine + phosphate = 5-(methylsulfanyl)-alpha-D-ribose 1-phosphate + adenine. It catalyses the reaction inosine + phosphate = alpha-D-ribose 1-phosphate + hypoxanthine. The enzyme catalyses adenosine + H2O + H(+) = inosine + NH4(+). Functionally, purine nucleoside enzyme that catalyzes the phosphorolysis of adenosine and inosine nucleosides, yielding D-ribose 1-phosphate and the respective free bases, adenine and hypoxanthine. Also catalyzes the phosphorolysis of S-methyl-5'-thioadenosine into adenine and S-methyl-5-thio-alpha-D-ribose 1-phosphate. Also has adenosine deaminase activity. This Synechocystis sp. (strain ATCC 27184 / PCC 6803 / Kazusa) protein is Purine nucleoside phosphorylase slr1573.